Here is a 138-residue protein sequence, read N- to C-terminus: Integration host factor subunit beta (138 aa).

Over residues 81–98 (KAGKELRERVDRSLERQG) the composition is skewed to basic and acidic residues. Residues 81–138 (KAGKELRERVDRSLERQGDSSSEGEPVSLTAVKAARQAGGHHAAGFPAEATPTLVMSR) are disordered.

This sequence belongs to the bacterial histone-like protein family. In terms of assembly, heterodimer of an alpha and a beta chain.

Functionally, this protein is one of the two subunits of integration host factor, a specific DNA-binding protein that functions in genetic recombination as well as in transcriptional and translational control. The sequence is that of Integration host factor subunit beta from Ralstonia nicotianae (strain ATCC BAA-1114 / GMI1000) (Ralstonia solanacearum).